Reading from the N-terminus, the 283-residue chain is 2-dehydro-3-deoxyphosphooctonate aldolase (283 aa).

Belongs to the KdsA family.

Its subcellular location is the cytoplasm. The catalysed reaction is D-arabinose 5-phosphate + phosphoenolpyruvate + H2O = 3-deoxy-alpha-D-manno-2-octulosonate-8-phosphate + phosphate. The protein operates within carbohydrate biosynthesis; 3-deoxy-D-manno-octulosonate biosynthesis; 3-deoxy-D-manno-octulosonate from D-ribulose 5-phosphate: step 2/3. It functions in the pathway bacterial outer membrane biogenesis; lipopolysaccharide biosynthesis. This chain is 2-dehydro-3-deoxyphosphooctonate aldolase, found in Parasynechococcus marenigrum (strain WH8102).